We begin with the raw amino-acid sequence, 283 residues long: Pantothenate synthetase (283 aa).

Position 30–37 (30–37 (MGNLHDAH)) interacts with ATP. His37 acts as the Proton donor in catalysis. Gln61 is a (R)-pantoate binding site. A beta-alanine-binding site is contributed by Gln61. Residue 149 to 152 (GVKD) participates in ATP binding. Residue Gln155 coordinates (R)-pantoate. ATP is bound by residues Val178 and 186-189 (MSSR).

The protein belongs to the pantothenate synthetase family. In terms of assembly, homodimer.

It localises to the cytoplasm. The enzyme catalyses (R)-pantoate + beta-alanine + ATP = (R)-pantothenate + AMP + diphosphate + H(+). Its pathway is cofactor biosynthesis; (R)-pantothenate biosynthesis; (R)-pantothenate from (R)-pantoate and beta-alanine: step 1/1. Catalyzes the condensation of pantoate with beta-alanine in an ATP-dependent reaction via a pantoyl-adenylate intermediate. The polypeptide is Pantothenate synthetase (Cellvibrio japonicus (strain Ueda107) (Pseudomonas fluorescens subsp. cellulosa)).